A 365-amino-acid chain; its full sequence is DNA N6-methyl methyltransferase (365 aa).

It belongs to the MT-A70-like family.

The catalysed reaction is a 2'-deoxyadenosine in DNA + S-adenosyl-L-methionine = an N(6)-methyl-2'-deoxyadenosine in DNA + S-adenosyl-L-homocysteine + H(+). In terms of biological role, methylates DNA on the 6th position of adenine (N(6)-methyladenosine). N(6)-methyladenosine (m6A) DNA is involved in epigenetic transgenerational inheritance. This Caenorhabditis elegans protein is DNA N6-methyl methyltransferase.